Here is a 252-residue protein sequence, read N- to C-terminus: Small ribosomal subunit protein uS2B (252 aa).

S2 carries the post-translational modification N-acetylserine. Acidic residues-rich tracts occupy residues 213–229 and 241–252; these read VAEE…EEVK and EWAEENADNVEW. The tract at residues 213-252 is disordered; sequence VAEEAAAAEEGEEEEVKEEVTEGQAEATEWAEENADNVEW.

Belongs to the universal ribosomal protein uS2 family. In terms of assembly, component of the small ribosomal subunit. Mature ribosomes consist of a small (40S) and a large (60S) subunit. The 40S subunit contains about 33 different proteins and 1 molecule of RNA (18S). The 60S subunit contains about 49 different proteins and 3 molecules of RNA (25S, 5.8S and 5S). Interacts with RPS21.

It localises to the cytoplasm. Functionally, required for the assembly and/or stability of the 40S ribosomal subunit. Required for the processing of the 20S rRNA-precursor to mature 18S rRNA in a late step of the maturation of 40S ribosomal subunits. This is Small ribosomal subunit protein uS2B from Saccharomyces cerevisiae (strain RM11-1a) (Baker's yeast).